A 117-amino-acid chain; its full sequence is Probable non-functional immunoglobulin heavy variable 3-16 (117 aa).

The signal sequence occupies residues 1–19 (MEFGLSWVFLAGILKGVQC). The framework-1 stretch occupies residues 20–44 (EVQLVESGGGLVQPGGSLRLSCAAS). In terms of domain architecture, Ig-like spans 21–117 (VQLVESGGGL…EDMAVYYCVR (97 aa)). Residues C41 and C115 are joined by a disulfide bond. Residues 45–52 (GFTFSNSD) form a complementarity-determining-1 region. Positions 53 to 69 (MNWARKAPGKGLEWVSG) are framework-2. A complementarity-determining-2 region spans residues 70–77 (VSWNGSRT). The N-linked (GlcNAc...) asparagine glycan is linked to N73. The framework-3 stretch occupies residues 78–115 (HYVDSVKRRFIISRDNSRNSLYLQKNRRRAEDMAVYYC). The segment at 116-117 (VR) is complementarity-determining-3.

As to quaternary structure, immunoglobulins are composed of two identical heavy chains and two identical light chains; disulfide-linked.

The protein resides in the secreted. The protein localises to the cell membrane. In terms of biological role, probable non-functional open reading frame (ORF) of V region of the variable domain of immunoglobulin heavy chains. Non-functional ORF generally cannot participate in the synthesis of a productive immunoglobulin chain due to altered V-(D)-J or switch recombination and/or splicing site (at mRNA level) and/or conserved amino acid change (protein level). Immunoglobulins, also known as antibodies, are membrane-bound or secreted glycoproteins produced by B lymphocytes. In the recognition phase of humoral immunity, the membrane-bound immunoglobulins serve as receptors which, upon binding of a specific antigen, trigger the clonal expansion and differentiation of B lymphocytes into immunoglobulins-secreting plasma cells. Secreted immunoglobulins mediate the effector phase of humoral immunity, which results in the elimination of bound antigens. The antigen binding site is formed by the variable domain of one heavy chain, together with that of its associated light chain. Thus, each immunoglobulin has two antigen binding sites with remarkable affinity for a particular antigen. The variable domains are assembled by a process called V-(D)-J rearrangement and can then be subjected to somatic hypermutations which, after exposure to antigen and selection, allow affinity maturation for a particular antigen. This Homo sapiens (Human) protein is Probable non-functional immunoglobulin heavy variable 3-16.